Consider the following 57-residue polypeptide: UPF0509 protein YciZ (57 aa).

The protein belongs to the UPF0509 family.

In Escherichia coli O127:H6 (strain E2348/69 / EPEC), this protein is UPF0509 protein YciZ.